We begin with the raw amino-acid sequence, 1040 residues long: Multidrug resistance protein MdtB (1040 aa).

The next 12 helical transmembrane spans lie at 25–45 (LLMAAILLAGIIGYRFLPVAA), 347–367 (LMLAIALVVMIIYLFLRNIPA), 369–389 (IIPGVAVPLSLIGTFAVMVFL), 396–416 (LTLMALTIATGFVVDDAIVVI), 440–460 (IGFTIISLTFSLIAVLIPLLF), 472–492 (FAVTLAVAILISAVVSLTLTP), 537–557 (WLTLSVAFATLLLSVMLWIVI), 863–883 (LGSTVWLIVAAVVAMYIVLGV), 888–908 (FIHPITILSTLPTAGVGALLA), 910–930 (IIAGSELDIIAIIGIILLIGI), 968–988 (ILMTTLAALLGALPLMLSTGV), and 998–1018 (IAMVGGLLVSQVLTLFTTPVI).

The protein belongs to the resistance-nodulation-cell division (RND) (TC 2.A.6) family. MdtB subfamily. As to quaternary structure, part of a tripartite efflux system composed of MdtA, MdtB and MdtC. MdtB forms a heteromultimer with MdtC.

It is found in the cell inner membrane. The sequence is that of Multidrug resistance protein MdtB from Salmonella paratyphi A (strain ATCC 9150 / SARB42).